The chain runs to 178 residues: CDP-archaeol synthase (178 aa).

The next 5 helical transmembrane spans lie at 3–23 (LLLLLFSAIWYILPAYVANAV), 56–76 (FFGILFGIITGILQHFIVILY), 91–111 (IILGFLLGTGALFGDMLGSFI), 123–143 (APLLDQMTFIVFALIFAYPLY), and 149–169 (LMVILLVISPIIHFSSNIIAY).

The protein belongs to the CDP-archaeol synthase family. Requires Mg(2+) as cofactor.

It is found in the cell membrane. The enzyme catalyses 2,3-bis-O-(geranylgeranyl)-sn-glycerol 1-phosphate + CTP + H(+) = CDP-2,3-bis-O-(geranylgeranyl)-sn-glycerol + diphosphate. It functions in the pathway membrane lipid metabolism; glycerophospholipid metabolism. Its function is as follows. Catalyzes the formation of CDP-2,3-bis-(O-geranylgeranyl)-sn-glycerol (CDP-archaeol) from 2,3-bis-(O-geranylgeranyl)-sn-glycerol 1-phosphate (DGGGP) and CTP. This reaction is the third ether-bond-formation step in the biosynthesis of archaeal membrane lipids. This is CDP-archaeol synthase from Methanococcus maripaludis (strain C7 / ATCC BAA-1331).